An 88-amino-acid polypeptide reads, in one-letter code: Period circadian protein (88 aa).

Positions 23–88 are disordered; sequence VTNTSIAGTG…VTLTESLLNK (66 aa). Repeat copies occupy residues 30-31, 33-34, 35-36, 37-38, 39-40, 41-42, 43-44, 45-46, 47-48, 49-50, 51-52, 53-54, 55-56, 57-58, 59-60, and 61-62. The segment at 30–62 is 16 X 2 AA tandem repeats of G-[TN]; the sequence is GTGGTGTGTGTGTGTGTGTGTGTGTGTGTGTGN. Positions 30 to 62 are enriched in gly residues; the sequence is GTGGTGTGTGTGTGTGTGTGTGTGTGTGTGTGN. Residues 79–88 show a composition bias toward polar residues; sequence VTLTESLLNK.

Forms a heterodimer with timeless (TIM); the complex then translocates into the nucleus. Phosphorylated with a circadian rhythmicity, probably by the double-time protein (dbt). Phosphorylation could be implicated in the stability of per monomer and in the formation of heterodimer per-tim.

The protein resides in the nucleus. The protein localises to the cytoplasm. Its subcellular location is the perinuclear region. Essential for biological clock functions. Determines the period length of circadian and ultradian rhythms; an increase in PER dosage leads to shortened circadian rhythms and a decrease leads to lengthened circadian rhythms. Essential for the circadian rhythmicity of locomotor activity, eclosion behavior, and for the rhythmic component of the male courtship song that originates in the thoracic nervous system. The biological cycle depends on the rhythmic formation and nuclear localization of the TIM-PER complex. Light induces the degradation of TIM, which promotes elimination of PER. Nuclear activity of the heterodimer coordinatively regulates PER and TIM transcription through a negative feedback loop. Behaves as a negative element in circadian transcriptional loop. Does not appear to bind DNA, suggesting indirect transcriptional inhibition. This chain is Period circadian protein (per), found in Drosophila teissieri (Fruit fly).